The chain runs to 502 residues: MESLSLIFISFITLIVFLVVSASKKRSHPSGYEPDIPKGGCPMLDSTAYLVLSSPTNTAVTSTGIITSNPENIEHVLKTNFANYPKGEHLTYGLYDLLGRGIFNSDGDHWKLQRKIASLEFNTRTIRHFVTHDVSREVLDRLLPSLSRAANSGEIIDLQEVLDRLAFDNVCKIAFDDDPARLADKKFNDGENDYYGKFAKAFGEAAEISTQRFEKSRWKIARALNLGTERKMKNALAIVNEFAMQVVREMKRKRAEEGKGRGSSADLLSLFISEGEFSDEFLRDVVISFVLAGRDTTSSTMAFFFWQVSTRPSICQKIKEEIVSVRKNHNNSQGGAFTLEELREMDYLHAVLSETLRLYPIVPLHARYTLADDVLPDGTMVKKGSTVMHSIYAMGRMESIWGADCLEFRPERWLENGVFRPKSPFLFPVFLAGPRMCLGKETAYMQMKAVAASVMEKFKIEVADGKHESEREYYLEIVLRLKGGLPVRVTEKEWSDNSAVNV.

The chain crosses the membrane as a helical span at residues 3 to 23; sequence SLSLIFISFITLIVFLVVSAS. A heme-binding site is contributed by C437.

This sequence belongs to the cytochrome P450 family. As to expression, mainly expressed in leaves and, at low levels, in roots, fruits and stems.

The protein resides in the membrane. It participates in steroid metabolism; cholesterol metabolism. Its function is as follows. Involved in the biosynthesis of spiroketal steroid and saponin natural products from cholesterol such as diosgenin and analogs (e.g. furostanol and spirostanol), plant defense compounds used as main precursors for the industrial production of steroid hormones. During the 5,6-spiroketalization of cholesterol, may catalyze the 27-monohydroxylation of furostanol-type steroid to an intermediate product that undergoes a stereospecific formation of the terminal heterocycle to yield diosgenin. In Paris polyphylla (Daiswa polyphylla), this protein is Cytochrome P450 CYP94D109.